The chain runs to 282 residues: Putative hydrolase BamMC406_5393 (282 aa).

Mg(2+)-binding residues include glutamate 124, glutamate 126, and aspartate 155.

This sequence belongs to the FAH family. Requires Mg(2+) as cofactor.

The polypeptide is Putative hydrolase BamMC406_5393 (Burkholderia ambifaria (strain MC40-6)).